A 59-amino-acid polypeptide reads, in one-letter code: Putative HTH-type transcriptional regulator YneL (59 aa).

One can recognise an HTH araC/xylS-type domain in the interval Met1 to Gly59. A DNA-binding region (H-T-H motif) is located at residues Val26–Leu49.

This Escherichia coli (strain K12) protein is Putative HTH-type transcriptional regulator YneL (yneL).